The chain runs to 40 residues: Sauvagin (40 aa).

Pyrrolidone carboxylic acid is present on glutamine 1. Position 40 is an isoleucine amide (isoleucine 40).

This sequence belongs to the sauvagine/corticotropin-releasing factor/urotensin I family.

It localises to the secreted. Its function is as follows. Hypotensive and diuretic peptide. The chain is Sauvagin from Phyllomedusa sauvagei (Sauvage's leaf frog).